A 432-amino-acid chain; its full sequence is Transcriptional adapter 3 (432 aa).

Positions 40 to 69 form a coiled coil; the sequence is IEELDTLQLELETLLSSASRRLRVLEAETQ. 2 disordered regions span residues 88–127 and 275–313; these read KEHE…RNMQ and SPVE…HTKS. Positions 293–305 are enriched in polar residues; it reads DGASTSPRSQNKP. Residues 367–407 adopt a coiled-coil conformation; that stretch reads LLRLAKEEMNRQELRQRVRMADNEVMDAFRKIMAARQKKRT.

The protein belongs to the NGG1 family.

It is found in the nucleus. Functionally, functions as a component of the PCAF complex. The PCAF complex is capable of efficiently acetylating histones in a nucleosomal context. The chain is Transcriptional adapter 3 (tada3) from Xenopus tropicalis (Western clawed frog).